We begin with the raw amino-acid sequence, 47 residues long: MAKGKRTFQPNNRRRARVHGFRLRMRTRAGRAIVSARRRKGRESLTA.

This sequence belongs to the bacterial ribosomal protein bL34 family.

The sequence is that of Large ribosomal subunit protein bL34 from Rhodococcus opacus (strain B4).